Reading from the N-terminus, the 297-residue chain is Bifunctional protein FolD 2 (297 aa).

NADP(+)-binding positions include 172–174, Thr199, and Val240; that span reads GRG.

This sequence belongs to the tetrahydrofolate dehydrogenase/cyclohydrolase family. Homodimer.

It catalyses the reaction (6R)-5,10-methylene-5,6,7,8-tetrahydrofolate + NADP(+) = (6R)-5,10-methenyltetrahydrofolate + NADPH. The catalysed reaction is (6R)-5,10-methenyltetrahydrofolate + H2O = (6R)-10-formyltetrahydrofolate + H(+). It participates in one-carbon metabolism; tetrahydrofolate interconversion. In terms of biological role, catalyzes the oxidation of 5,10-methylenetetrahydrofolate to 5,10-methenyltetrahydrofolate and then the hydrolysis of 5,10-methenyltetrahydrofolate to 10-formyltetrahydrofolate. This chain is Bifunctional protein FolD 2, found in Paenarthrobacter aurescens (strain TC1).